The sequence spans 280 residues: Adenosylcobinamide-GDP ribazoletransferase (280 aa).

Transmembrane regions (helical) follow at residues 4–24 (YLLAFKSGFGFLSTIPVGISM), 39–59 (VVGAVLGLLIGAVAFIGQVIF), 61–81 (GPVLAALLMGFIYYITGFNHL), 108–128 (TIGTGGVSFCILLLLTLYGSI), 196–216 (FLIGFVFGAIVCFLPFGWIGL), and 255–275 (TALIILAVLLQLSLNGYMGGF).

Belongs to the CobS family. Mg(2+) is required as a cofactor.

It localises to the cell membrane. The catalysed reaction is alpha-ribazole + adenosylcob(III)inamide-GDP = adenosylcob(III)alamin + GMP + H(+). The enzyme catalyses alpha-ribazole 5'-phosphate + adenosylcob(III)inamide-GDP = adenosylcob(III)alamin 5'-phosphate + GMP + H(+). Its pathway is cofactor biosynthesis; adenosylcobalamin biosynthesis; adenosylcobalamin from cob(II)yrinate a,c-diamide: step 7/7. Its function is as follows. Joins adenosylcobinamide-GDP and alpha-ribazole to generate adenosylcobalamin (Ado-cobalamin). Also synthesizes adenosylcobalamin 5'-phosphate from adenosylcobinamide-GDP and alpha-ribazole 5'-phosphate. This is Adenosylcobinamide-GDP ribazoletransferase from Methanosarcina barkeri (strain Fusaro / DSM 804).